The primary structure comprises 1492 residues: Cystic fibrosis transmembrane conductance regulator (1492 aa).

At 1–78 the chain is on the cytoplasmic side; that stretch reads MQRSPIEKAN…KLVNALRRCF (78 aa). A helical membrane pass occupies residues 79–99; the sequence is FWRFLFYGILLYFVEFTKAVQ. Residues 82–366 form the ABC transmembrane type-1 1 domain; sequence FLFYGILLYF…SAIQTWYDSL (285 aa). The Extracellular segment spans residues 100-123; it reads PLCLGRIIASYNAKNTYEREIAYY. The chain crosses the membrane as a helical span at residues 124-147; the sequence is LALGLCLLFVVRTLFLHPAVFGLQ. The Cytoplasmic portion of the chain corresponds to 148-196; it reads HLGMQMRIALFSLIYKKILKMSSRVLDKIDTGQLVSLLSNNLNKFDEGV. A helical membrane pass occupies residues 197 to 217; sequence AVAHFVWIAPVQVVLLMGLIW. The Extracellular portion of the chain corresponds to 218–223; it reads NELTEF. A helical membrane pass occupies residues 224-244; it reads VFCGLGFLIMLALFQAWLGKK. The Cytoplasmic segment spans residues 245 to 299; the sequence is MMQYRDKRAGKINERLAITSEIIDNIQSVKVYCWEDAMEKIIDDIRQVELKLTRK. A helical transmembrane segment spans residues 300 to 320; it reads VAYCRYFSSSAFFFSGFFVVF. Topologically, residues 321–340 are extracellular; sequence LSVVPYAFIHTIKLRRIFTT. A helical transmembrane segment spans residues 341–359; the sequence is ISYNIVLRMTVTRQFPSAI. Over 360–867 the chain is Cytoplasmic; sequence QTWYDSLGAI…YLRYVTTNRN (508 aa). Residues W402, S435, 459-466, and Q494 contribute to the ATP site; that span reads GSTGSGKS. The ABC transporter 1 domain maps to 424 to 647; sequence NGDDGLFFSN…KPDFSSQLLG (224 aa). Residues 655-840 form a disordered R region region; sequence SAERRNSILT…EEINEEDLKE (186 aa). A helical transmembrane segment spans residues 868–888; sequence LVFVLILCLVIFLAEVAASLA. Positions 868–1169 constitute an ABC transmembrane type-1 2 domain; sequence LVFVLILCLV…AVNSSIDVDG (302 aa). The Extracellular portion of the chain corresponds to 889–932; the sequence is GLWIISGLAINTGSQTNDTSTDLSHLSVFSKFITNGSHYYIFYI. Residues N905 and N923 are each glycosylated (N-linked (GlcNAc...) asparagine). Residues 933–953 form a discontinuously helical membrane-spanning segment; that stretch reads YVGLADSFLALGVIRGLPLVH. The Cytoplasmic portion of the chain corresponds to 954–1004; the sequence is TLVTVSKDLHKQMLHSVLQGPMTAFNKMKAGRILNRFIKDTAIIDDMLPLT. Residues 1005-1025 form a helical membrane-spanning segment; that stretch reads VFDFVQLILIVVGAICVVSVL. The Extracellular segment spans residues 1026 to 1027; it reads QP. The helical transmembrane segment at 1028–1048 threads the bilayer; it reads YTLLAAIPVAVIFIMLRAYFL. The Cytoplasmic segment spans residues 1049–1109; the sequence is RTSQQLKQLE…TANWFLYLST (61 aa). A helical membrane pass occupies residues 1110-1130; the sequence is LRWFQMRIDIVFVLFFIAVTF. Residues 1131-1144 lie on the Extracellular side of the membrane; the sequence is IAIATHDVGEGQVG. A helical transmembrane segment spans residues 1145-1165; it reads IILTLAMNITSTLQWAVNSSI. Over 1166 to 1492 the chain is Cytoplasmic; sequence DVDGLMRSVS…AEEDLQETRL (327 aa). An ABC transporter 2 domain is found at 1220-1453; sequence MMVNNLTAKY…ASLFKQVFGH (234 aa). ATP contacts are provided by residues Y1229 and 1254–1261; that span reads GRTGAGKS. Positions 1465-1474 are enriched in basic residues; it reads RNSSKRKTRP. The tract at residues 1465 to 1492 is disordered; that stretch reads RNSSKRKTRPKISALQEEAEEDLQETRL. The segment covering 1481–1492 has biased composition (acidic residues); that stretch reads EEAEEDLQETRL. The PDZ-binding motif lies at 1483 to 1485; the sequence is AEE.

It belongs to the ABC transporter superfamily. ABCC family. CFTR transporter (TC 3.A.1.202) subfamily. As to quaternary structure, monomer; does not require oligomerization for channel activity. May form oligomers in the membrane. Post-translationally, phosphorylated; cAMP treatment promotes phosphorylation and activates the channel. Dephosphorylation decreases the ATPase activity (in vitro). Phosphorylation at PKA sites activates the channel. Phosphorylation at PKC sites enhances the response to phosphorylation by PKA. Expressed in the rectal gland (at protein level).

The protein localises to the apical cell membrane. It is found in the early endosome membrane. The protein resides in the cell membrane. It localises to the recycling endosome membrane. Its subcellular location is the endoplasmic reticulum membrane. The catalysed reaction is ATP + H2O + closed Cl(-) channel = ADP + phosphate + open Cl(-) channel.. The enzyme catalyses chloride(in) = chloride(out). It carries out the reaction hydrogencarbonate(in) = hydrogencarbonate(out). It catalyses the reaction ATP + H2O = ADP + phosphate + H(+). Functionally, epithelial ion channel that plays an important role in the regulation of epithelial ion and water transport and fluid homeostasis. Mediates the transport of chloride ions across the cell membrane. Possesses an intrinsic ATPase activity and utilizes ATP to gate its channel; the passive flow of anions through the channel is gated by cycles of ATP binding and hydrolysis by the ATP-binding domains. The ion channel is also permeable to HCO(3)(-); selectivity depends on the extracellular chloride concentration. Exerts its function also by modulating the activity of other ion channels and transporters. Contributes to the regulation of the pH and the ion content of the epithelial fluid layer. In Squalus acanthias (Spiny dogfish), this protein is Cystic fibrosis transmembrane conductance regulator.